A 564-amino-acid polypeptide reads, in one-letter code: Urease subunit alpha (564 aa).

The region spanning 126–564 (GGIDTHIHFI…LPMAQRYFLF (439 aa)) is the Urease domain. Residues histidine 131, histidine 133, and lysine 214 each coordinate Ni(2+). Position 214 is an N6-carboxylysine (lysine 214). Histidine 216 contributes to the substrate binding site. The Ni(2+) site is built by histidine 243 and histidine 269. The active-site Proton donor is the histidine 317. Aspartate 357 serves as a coordination point for Ni(2+).

This sequence belongs to the metallo-dependent hydrolases superfamily. Urease alpha subunit family. Heterotrimer of UreA (gamma), UreB (beta) and UreC (alpha) subunits. Three heterotrimers associate to form the active enzyme. Requires Ni cation as cofactor. In terms of processing, carboxylation allows a single lysine to coordinate two nickel ions.

Its subcellular location is the cytoplasm. The catalysed reaction is urea + 2 H2O + H(+) = hydrogencarbonate + 2 NH4(+). The protein operates within nitrogen metabolism; urea degradation; CO(2) and NH(3) from urea (urease route): step 1/1. The protein is Urease subunit alpha of Burkholderia thailandensis (strain ATCC 700388 / DSM 13276 / CCUG 48851 / CIP 106301 / E264).